The following is a 184-amino-acid chain: Peptide deformylase 2 (184 aa).

Residues C110 and H153 each coordinate Fe cation. E154 is an active-site residue. H157 is a binding site for Fe cation.

The protein belongs to the polypeptide deformylase family. Fe(2+) is required as a cofactor.

It carries out the reaction N-terminal N-formyl-L-methionyl-[peptide] + H2O = N-terminal L-methionyl-[peptide] + formate. Its function is as follows. Removes the formyl group from the N-terminal Met of newly synthesized proteins. Requires at least a dipeptide for an efficient rate of reaction. N-terminal L-methionine is a prerequisite for activity but the enzyme has broad specificity at other positions. This chain is Peptide deformylase 2, found in Geobacillus stearothermophilus (Bacillus stearothermophilus).